The following is a 273-amino-acid chain: Large ribosomal subunit protein uL2 (273 aa).

Disordered regions lie at residues 34–54 (LEKK…TRHI) and 223–273 (VAMN…RRRK).

This sequence belongs to the universal ribosomal protein uL2 family. As to quaternary structure, part of the 50S ribosomal subunit. Forms a bridge to the 30S subunit in the 70S ribosome.

Its function is as follows. One of the primary rRNA binding proteins. Required for association of the 30S and 50S subunits to form the 70S ribosome, for tRNA binding and peptide bond formation. It has been suggested to have peptidyltransferase activity; this is somewhat controversial. Makes several contacts with the 16S rRNA in the 70S ribosome. The protein is Large ribosomal subunit protein uL2 of Azotobacter vinelandii (strain DJ / ATCC BAA-1303).